The following is a 91-amino-acid chain: Small ribosomal subunit protein uS19 (91 aa).

Belongs to the universal ribosomal protein uS19 family.

Functionally, protein S19 forms a complex with S13 that binds strongly to the 16S ribosomal RNA. This chain is Small ribosomal subunit protein uS19, found in Pseudoalteromonas atlantica (strain T6c / ATCC BAA-1087).